We begin with the raw amino-acid sequence, 1073 residues long: Carbamoyl phosphate synthase large chain (1073 aa).

The segment at 1-402 (MPRRIDVRKV…ALQKAIRMLD (402 aa)) is carboxyphosphate synthetic domain. The ATP site is built by Arg-129, Arg-169, Gly-175, Gly-176, Lys-208, Leu-210, Glu-215, Gly-241, Val-242, His-243, Gln-284, and Glu-299. The 196-residue stretch at 133 to 328 (RETMMKAGLP…LAYIAAKLAL (196 aa)) folds into the ATP-grasp 1 domain. Positions 284, 299, and 301 each coordinate Mg(2+). Residues Gln-284, Glu-299, and Asn-301 each coordinate Mn(2+). Positions 403 to 555 (IGEPGVVAGP…MSYNAYEDDE (153 aa)) are oligomerization domain. The tract at residues 556 to 944 (PITTGRPRLI…LKSWLSVQGN (389 aa)) is carbamoyl phosphate synthetic domain. Residues 681–871 (SQLLEELGIK…LMRAAAEAAL (191 aa)) enclose the ATP-grasp 2 domain. Arg-717, Lys-756, Leu-758, Glu-763, Gly-787, Val-788, His-789, Ser-790, Gln-830, and Glu-842 together coordinate ATP. Gln-830, Glu-842, and Asn-844 together coordinate Mg(2+). Positions 830, 842, and 844 each coordinate Mn(2+). Residues 944–1073 (NRIPPAGSIV…EYWGPNVEPF (130 aa)) enclose the MGS-like domain. Residues 945–1073 (RIPPAGSIVL…EYWGPNVEPF (129 aa)) form an allosteric domain region.

Belongs to the CarB family. As to quaternary structure, composed of two chains; the small (or glutamine) chain promotes the hydrolysis of glutamine to ammonia, which is used by the large (or ammonia) chain to synthesize carbamoyl phosphate. Tetramer of heterodimers (alpha,beta)4. The cofactor is Mg(2+). Requires Mn(2+) as cofactor.

The enzyme catalyses hydrogencarbonate + L-glutamine + 2 ATP + H2O = carbamoyl phosphate + L-glutamate + 2 ADP + phosphate + 2 H(+). The catalysed reaction is hydrogencarbonate + NH4(+) + 2 ATP = carbamoyl phosphate + 2 ADP + phosphate + 2 H(+). The protein operates within amino-acid biosynthesis; L-arginine biosynthesis; carbamoyl phosphate from bicarbonate: step 1/1. Its pathway is pyrimidine metabolism; UMP biosynthesis via de novo pathway; (S)-dihydroorotate from bicarbonate: step 1/3. Large subunit of the glutamine-dependent carbamoyl phosphate synthetase (CPSase). CPSase catalyzes the formation of carbamoyl phosphate from the ammonia moiety of glutamine, carbonate, and phosphate donated by ATP, constituting the first step of 2 biosynthetic pathways, one leading to arginine and/or urea and the other to pyrimidine nucleotides. The large subunit (synthetase) binds the substrates ammonia (free or transferred from glutamine from the small subunit), hydrogencarbonate and ATP and carries out an ATP-coupled ligase reaction, activating hydrogencarbonate by forming carboxy phosphate which reacts with ammonia to form carbamoyl phosphate. The chain is Carbamoyl phosphate synthase large chain from Hyperthermus butylicus (strain DSM 5456 / JCM 9403 / PLM1-5).